A 215-amino-acid chain; its full sequence is 3-demethoxyubiquinol 3-hydroxylase (215 aa).

Residues E64, E94, H97, E146, E178, and H181 each coordinate Fe cation.

It belongs to the COQ7 family. It depends on Fe cation as a cofactor.

It localises to the cell membrane. The catalysed reaction is a 5-methoxy-2-methyl-3-(all-trans-polyprenyl)benzene-1,4-diol + AH2 + O2 = a 3-demethylubiquinol + A + H2O. The protein operates within cofactor biosynthesis; ubiquinone biosynthesis. In terms of biological role, catalyzes the hydroxylation of 2-nonaprenyl-3-methyl-6-methoxy-1,4-benzoquinol during ubiquinone biosynthesis. In Pseudomonas aeruginosa (strain LESB58), this protein is 3-demethoxyubiquinol 3-hydroxylase.